We begin with the raw amino-acid sequence, 333 residues long: Ketoreductase sphI (333 aa).

Tyr167 is an NADP(+) binding site.

It belongs to the NAD(P)-dependent epimerase/dehydratase family. Dihydroflavonol-4-reductase subfamily.

Ketoreductase; part of the gene cluster that mediates the biosynthesis of sphingofungins, bioactive molecules acting as sphingolipid inhibitors via inhibiting serine palmitoyl transferase (SPT). Does not seem to be involved in any biosynthetic process leading to the production of sphingofungins, but might be connected to a regulation or resistance mechanism. The polypeptide is Ketoreductase sphI (Aspergillus fumigatus (strain CBS 144.89 / FGSC A1163 / CEA10) (Neosartorya fumigata)).